The sequence spans 130 residues: Small ribosomal subunit protein bS6 (130 aa).

Residues 96–130 (VTEASPMAKARDERDSRRSPSDDRIEEESAEENAE) are disordered. Residues 104-118 (KARDERDSRRSPSDD) are compositionally biased toward basic and acidic residues. Residues 119–130 (RIEEESAEENAE) show a composition bias toward acidic residues.

The protein belongs to the bacterial ribosomal protein bS6 family.

Binds together with bS18 to 16S ribosomal RNA. The sequence is that of Small ribosomal subunit protein bS6 from Shewanella denitrificans (strain OS217 / ATCC BAA-1090 / DSM 15013).